Here is a 320-residue protein sequence, read N- to C-terminus: L-lactate dehydrogenase (320 aa).

Residues 15–16 (FV), aspartate 37, lysine 42, tyrosine 68, and 82–83 (GA) each bind NAD(+). Substrate-binding positions include glutamine 85, arginine 91, and 123 to 126 (NPVD). Residues 121 to 123 (ATN) and serine 146 each bind NAD(+). 151–154 (DSAR) is a binding site for substrate. Residues arginine 156 and 168–172 (QNVHA) each bind beta-D-fructose 1,6-bisphosphate. The Proton acceptor role is filled by histidine 178. Residue tyrosine 223 is modified to Phosphotyrosine. Threonine 232 lines the substrate pocket.

It belongs to the LDH/MDH superfamily. LDH family. Homotetramer.

Its subcellular location is the cytoplasm. The catalysed reaction is (S)-lactate + NAD(+) = pyruvate + NADH + H(+). The protein operates within fermentation; pyruvate fermentation to lactate; (S)-lactate from pyruvate: step 1/1. Allosterically activated by fructose 1,6-bisphosphate (FBP). Functionally, catalyzes the conversion of lactate to pyruvate. The sequence is that of L-lactate dehydrogenase from Bacillus subtilis (strain 168).